A 104-amino-acid chain; its full sequence is Guanidinium exporter (104 aa).

M1 is a topological domain (cytoplasmic). The chain crosses the membrane as a helical span at residues 2 to 19 (AWIILVIAGLLEVIWAIG). Residues 20 to 28 (LKYSHGFSR) are Periplasmic-facing. The helical transmembrane segment at 29–48 (LTPSIITLVAMAASVFLLAY) threads the bilayer. Residues 49–54 (AMKSLP) are Cytoplasmic-facing. The chain crosses the membrane as a helical span at residues 55–77 (AGTAYAVWTGIGAVGTAILGIVL). Topologically, residues 78 to 81 (LGES) are periplasmic. A helical transmembrane segment spans residues 82–100 (ASLARILSLGLILAGIIGL). Residues 101-104 (KLAS) lie on the Cytoplasmic side of the membrane.

Belongs to the drug/metabolite transporter (DMT) superfamily. Small multidrug resistance (SMR) (TC 2.A.7.1) family. Gdx/SugE subfamily.

It is found in the cell inner membrane. Its function is as follows. Guanidinium ion exporter. Couples guanidinium export to the proton motive force, exchanging one guanidinium ion for two protons. In Yersinia pestis, this protein is Guanidinium exporter.